The primary structure comprises 218 residues: Protein-L-isoaspartate O-methyltransferase (218 aa).

The active site involves serine 52.

The protein belongs to the methyltransferase superfamily. L-isoaspartyl/D-aspartyl protein methyltransferase family.

Its subcellular location is the cytoplasm. It carries out the reaction [protein]-L-isoaspartate + S-adenosyl-L-methionine = [protein]-L-isoaspartate alpha-methyl ester + S-adenosyl-L-homocysteine. Functionally, catalyzes the methyl esterification of L-isoaspartyl residues in peptides and proteins that result from spontaneous decomposition of normal L-aspartyl and L-asparaginyl residues. It plays a role in the repair and/or degradation of damaged proteins. The protein is Protein-L-isoaspartate O-methyltransferase of Rhodopseudomonas palustris (strain ATCC BAA-98 / CGA009).